Consider the following 225-residue polypeptide: Cytidylate kinase (225 aa).

11–19 (GPAAAGKST) provides a ligand contact to ATP.

Belongs to the cytidylate kinase family. Type 1 subfamily.

It localises to the cytoplasm. The catalysed reaction is CMP + ATP = CDP + ADP. It catalyses the reaction dCMP + ATP = dCDP + ADP. This Bacillus cereus (strain AH187) protein is Cytidylate kinase.